Here is a 284-residue protein sequence, read N- to C-terminus: Tropomyosin (284 aa).

Residues 1-284 adopt a coiled-coil conformation; the sequence is MDAIKKKMQA…DQTFQELFGY (284 aa). Positions 113–142 are enriched in basic and acidic residues; the sequence is LEKATHTADESDRVRKVMENRSFQDEERAN. The disordered stretch occupies residues 113–143; it reads LEKATHTADESDRVRKVMENRSFQDEERANT.

Belongs to the tropomyosin family.

In terms of biological role, tropomyosin, in association with the troponin complex, plays a central role in the calcium dependent regulation of muscle contraction. This chain is Tropomyosin, found in Acanthocheilonema viteae (Filarial nematode worm).